Here is a 180-residue protein sequence, read N- to C-terminus: GTP cyclohydrolase 1 (180 aa).

3 residues coordinate Zn(2+): cysteine 71, histidine 74, and cysteine 142.

It belongs to the GTP cyclohydrolase I family. Homomer.

It catalyses the reaction GTP + H2O = 7,8-dihydroneopterin 3'-triphosphate + formate + H(+). It participates in cofactor biosynthesis; 7,8-dihydroneopterin triphosphate biosynthesis; 7,8-dihydroneopterin triphosphate from GTP: step 1/1. This Helicobacter pylori (strain P12) protein is GTP cyclohydrolase 1.